Reading from the N-terminus, the 129-residue chain is uncharacterized protein (129 aa).

2 consecutive transmembrane segments (helical) span residues 4–24 (FKFL…ILII) and 37–57 (VISL…DLSI).

The protein to B.burgdorferi BBF20.

It localises to the cell membrane. This is an uncharacterized protein from Borreliella burgdorferi (strain ATCC 35210 / DSM 4680 / CIP 102532 / B31) (Borrelia burgdorferi).